The following is a 723-amino-acid chain: Lim and transglutaminase domain protein ltd-1 (723 aa).

The LIM zinc-binding domain occupies 5–72; that stretch reads QHCNRCGKQV…SNHVPIAGPH (68 aa).

Belongs to the transglutaminase-like superfamily. As to expression, expressed in the Y and U rectal epithelial cells, in marginal cells of the terminal bulb and isthmus of the pharynx (at protein level).

The protein resides in the cytoplasm. It is found in the cytoskeleton. Its function is as follows. Cytoskeleton-associated protein. May play a role in hypodermal cell development. This Caenorhabditis elegans protein is Lim and transglutaminase domain protein ltd-1.